The following is a 171-amino-acid chain: Myelin basic protein (171 aa).

Alanine 1 carries the N-acetylalanine modification. Basic residues predominate over residues 1–12 (ASQKRPSQRHGS). The disordered stretch occupies residues 1–171 (ASQKRPSQRH…SRSGSPMARR (171 aa)). A phosphoserine mark is found at serine 7 and serine 12. Position 14 is a phosphotyrosine (tyrosine 14). A Phosphoserine modification is found at serine 19. The residue at position 20 (threonine 20) is a Phosphothreonine. Arginine 25 and arginine 31 each carry citrulline. Threonine 35 carries the post-translational modification Phosphothreonine. Serine 39 is subject to Phosphoserine. Residues arginine 42 and arginine 48 each carry the omega-N-methylarginine modification. The residue at position 55 (serine 55) is a Phosphoserine. Threonine 66 is modified (phosphothreonine). Tyrosine 68 is modified (phosphotyrosine). A phosphothreonine mark is found at threonine 95 and threonine 98. Glutamine 103 carries the post-translational modification Deamidated glutamine. Omega-N-methylarginine; alternate is present on arginine 107. Position 107 is a symmetric dimethylarginine; alternate (arginine 107). Serine 115 bears the Phosphoserine mark. The residue at position 122 (lysine 122) is an N6-acetyllysine. Citrulline is present on arginine 130. Glutamine 148 carries the deamidated glutamine modification. Position 160 is a citrulline (arginine 160). Residue serine 162 is modified to Phosphoserine. Serine 166 carries the post-translational modification Phosphoserine; by UHMK1. The residue at position 171 (arginine 171) is a Citrulline.

This sequence belongs to the myelin basic protein family. As to quaternary structure, homodimer. Post-translationally, as in other animals, several charge isomers may be produced as a result of optional post-translational modifications, such as phosphorylation of serine or threonine residues, deamidation of glutamine or asparagine residues, citrullination and methylation of arginine residues. Phosphorylated by TAOK2, VRK2, MAPK11, MAPK12, MAPK14 and MINK1. In terms of processing, proteolytically cleaved in B cell lysosomes by cathepsin CTSG which degrades the major immunogenic MBP epitope and prevents the activation of MBP-specific autoreactive T cells.

The protein resides in the myelin membrane. Is, with PLP, the most abundant protein component of the myelin membrane in the CNS. Has a role in both the formation and stabilization of this compact multilayer arrangement of bilayers. Each splice variant and charge isomer may have a specialized function in the assembly of an optimized, biochemically functional myelin membrane. This Sus scrofa (Pig) protein is Myelin basic protein (MBP).